A 365-amino-acid chain; its full sequence is Peptide chain release factor 2 (365 aa).

Q251 bears the N5-methylglutamine mark.

The protein belongs to the prokaryotic/mitochondrial release factor family. Post-translationally, methylated by PrmC. Methylation increases the termination efficiency of RF2.

Its subcellular location is the cytoplasm. Functionally, peptide chain release factor 2 directs the termination of translation in response to the peptide chain termination codons UGA and UAA. The protein is Peptide chain release factor 2 of Campylobacter jejuni subsp. jejuni serotype O:2 (strain ATCC 700819 / NCTC 11168).